The following is a 249-amino-acid chain: Adapter protein MecA (249 aa).

Belongs to the MecA family. In terms of assembly, homodimer.

Enables the recognition and targeting of unfolded and aggregated proteins to the ClpC protease or to other proteins involved in proteolysis. This chain is Adapter protein MecA, found in Streptococcus thermophilus (strain ATCC BAA-250 / LMG 18311).